The chain runs to 358 residues: Peptide chain release factor 1 (358 aa).

Position 235 is an N5-methylglutamine (Gln235).

This sequence belongs to the prokaryotic/mitochondrial release factor family. Post-translationally, methylated by PrmC. Methylation increases the termination efficiency of RF1.

It localises to the cytoplasm. In terms of biological role, peptide chain release factor 1 directs the termination of translation in response to the peptide chain termination codons UAG and UAA. The protein is Peptide chain release factor 1 of Brachyspira hyodysenteriae (strain ATCC 49526 / WA1).